We begin with the raw amino-acid sequence, 255 residues long: Probable transcriptional regulatory protein PCC7424_2775 (255 aa).

It belongs to the TACO1 family.

It localises to the cytoplasm. The protein is Probable transcriptional regulatory protein PCC7424_2775 of Gloeothece citriformis (strain PCC 7424) (Cyanothece sp. (strain PCC 7424)).